We begin with the raw amino-acid sequence, 589 residues long: Ubiquilin-1 (589 aa).

The span at 1 to 11 shows a compositional bias: gly residues; it reads MAESGESGGPP. Disordered stretches follow at residues 1–35 and 110–145; these read MAESGESGGPPGSQDSAAGAEGAGAPAAAASAEPK and NRPQDHSAQQTNTAGSNVTTSSTPNSNSTSGSATSN. Ala-2 carries the post-translational modification N-acetylalanine. A compositionally biased stretch (low complexity) spans 12–35; the sequence is GSQDSAAGAEGAGAPAAAASAEPK. The Ubiquitin-like domain maps to 37 to 111; the sequence is MKVTVKTPKE…VHLVIKTQNR (75 aa). Residues 110–124 are compositionally biased toward polar residues; sequence NRPQDHSAQQTNTAG. A compositionally biased stretch (low complexity) spans 125-145; that stretch reads SNVTTSSTPNSNSTSGSATSN. Positions 178-428 are interaction with UBXN4; the sequence is QLLSNPEMMV…LNNPLFAGNP (251 aa). 2 STI1 domains span residues 182-210 and 212-251; these read NPEMMVQIMENPFVQSMLSNPDLMRQLIM and NPQMQQLIQRNPEISHMLNNPDIMRQTLELARNPAMMQEM. The tract at residues 295–371 is disordered; sequence PFASLVSNTS…NLVPGVGASM (77 aa). Residues 299-313 are compositionally biased toward polar residues; it reads LVSNTSSGEGSQPSR. Low complexity predominate over residues 327–360; it reads QTSQSSSASSGTASTVGGTTGSTASGTSGQSTTA. 2 STI1 domains span residues 387-434 and 438-470; these read NPQL…QEQM and LPTFLQQMQNPDTLSAMSNPRAMQALLQIQQGL. A disordered region spans residues 488–520; the sequence is LGALGSTGGSSGTNGSNATPSENTSPTAGTTEP. Gly residues predominate over residues 489–499; sequence GALGSTGGSSG. The span at 509-520 shows a compositional bias: polar residues; sequence ENTSPTAGTTEP. Residues 546–586 enclose the UBA domain; that stretch reads RFQQQLEQPSAMGFLNREANLQALIATGGDINAAIERLLGS.

Monomer and homodimer. Heterodimer with UBQLN2. Binds CD47, NBL1, GABRA1, GABRA2, GABRA3, GABRA6, GABRB1, GABRB2 and GABRB3. Binds UBE3A, BTRC, P4HB and MTOR. Interacts with the proteasome 19S subunit. Interacts (via ubiquitin-like domain) with TREX1; the interaction is direct and may control TREX1 subcellular location. Forms a complex with UBXN4 and VCP. Interacts (via UBA domain) with UBQLN4 (via ubiquitin-like domain). Found in a complex with UBQLN2 and MAP1LC3A/B/C. The monomeric form interacts with PSEN1 and PSEN2. Interacts with ORAI1. Interacts (via UBA domain) with TICAM1. Interacts with EPS15. Interacts (via UBA domain) with UBA52 and (via ubiquitin-like domain) with PSMD3 and PSMD4. Interacts with HERPUD1. Interacts with MAP1LC3A/B/C in the presence of UBQLN4. Interacts (via ubiquitin-like domain) with EPS15 (via UIM domains) and both the ubiquitinated and non-ubiquitinated forms can interact with EPS15. Interacts (via ubiquitin-like domain) with EPS15L1, HGS (via UIM domain) and STAM2 (via UIM domain). Interacts with BCL2L10/BCL-B; in the cytoplasm. In terms of processing, degraded during both macroautophagy and during chaperone-mediated autophagy (CMA). Phosphorylated. Post-translationally, ubiquitinated.

The protein localises to the nucleus. The protein resides in the cytoplasm. It is found in the endoplasmic reticulum. It localises to the cytoplasmic vesicle. Its subcellular location is the autophagosome. The protein localises to the cell membrane. Its function is as follows. Plays an important role in the regulation of different protein degradation mechanisms and pathways including ubiquitin-proteasome system (UPS), autophagy and endoplasmic reticulum-associated protein degradation (ERAD) pathway. Mediates the proteasomal targeting of misfolded or accumulated proteins for degradation by binding (via UBA domain) to their polyubiquitin chains and by interacting (via ubiquitin-like domain) with the subunits of the proteasome. Plays a role in the ERAD pathway via its interaction with ER-localized proteins UBXN4, VCP and HERPUD1 and may form a link between the polyubiquitinated ERAD substrates and the proteasome. Plays a role in unfolded protein response (UPR) by attenuating the induction of UPR-inducible genes, DDTI3/CHOP, HSPA5 and PDIA2 during ER stress. Involved in the regulation of macroautophagy and autophagosome formation; required for maturation of autophagy-related protein LC3 from the cytosolic form LC3-I to the membrane-bound form LC3-II and may assist in the maturation of autophagosomes to autolysosomes by mediating autophagosome-lysosome fusion. Negatively regulates the TICAM1/TRIF-dependent toll-like receptor signaling pathway by decreasing the abundance of TICAM1 via the autophagic pathway. Promotes the ubiquitination and lysosomal degradation of ORAI1, consequently down-regulating the ORAI1-mediated Ca2+ mobilization. Suppresses the maturation and proteasomal degradation of amyloid beta A4 protein (A4) by stimulating the lysine 63 (K63)-linked polyubiquitination. Delays the maturation of A4 by sequestering it in the Golgi apparatus and preventing its transport to the cell surface for subsequent processing. Ubiquitinates BCL2L10 and thereby stabilizes protein abundance. The protein is Ubiquilin-1 (UBQLN1) of Pongo abelii (Sumatran orangutan).